A 158-amino-acid polypeptide reads, in one-letter code: Cyclic pyranopterin monophosphate synthase (158 aa).

Substrate is bound by residues 75–77 (LCH) and 113–114 (ME). The active site involves aspartate 128.

The protein belongs to the MoaC family. As to quaternary structure, homohexamer; trimer of dimers.

It catalyses the reaction (8S)-3',8-cyclo-7,8-dihydroguanosine 5'-triphosphate = cyclic pyranopterin phosphate + diphosphate. Its pathway is cofactor biosynthesis; molybdopterin biosynthesis. Its function is as follows. Catalyzes the conversion of (8S)-3',8-cyclo-7,8-dihydroguanosine 5'-triphosphate to cyclic pyranopterin monophosphate (cPMP). In Roseiflexus castenholzii (strain DSM 13941 / HLO8), this protein is Cyclic pyranopterin monophosphate synthase.